The following is a 181-amino-acid chain: Adenine phosphoribosyltransferase (181 aa).

The protein belongs to the purine/pyrimidine phosphoribosyltransferase family. As to quaternary structure, homodimer.

The protein resides in the cytoplasm. It catalyses the reaction AMP + diphosphate = 5-phospho-alpha-D-ribose 1-diphosphate + adenine. It functions in the pathway purine metabolism; AMP biosynthesis via salvage pathway; AMP from adenine: step 1/1. In terms of biological role, catalyzes a salvage reaction resulting in the formation of AMP, that is energically less costly than de novo synthesis. The protein is Adenine phosphoribosyltransferase of Vibrio cholerae serotype O1 (strain ATCC 39541 / Classical Ogawa 395 / O395).